Consider the following 177-residue polypeptide: B9 domain-containing protein 2 (177 aa).

The region spanning 2-118 (AEVHIIGQIL…EIGTWKVAPN (117 aa)) is the C2 B9-type domain.

Belongs to the B9D family. As to quaternary structure, probable component of the tectonic-like complex (also named MKS complex), composed of B9d1, B9d2, Cc2d2a, Mks1 and tctn. As to expression, expressed in chordotonal neurons in the antennae (at protein level). Expressed in spermatids (at protein level).

Its subcellular location is the cytoplasm. The protein resides in the cytoskeleton. It is found in the cilium basal body. Functionally, probable component of the tectonic-like complex (also named MKS complex), a complex localized at the transition zone of primary cilia. Has a role in ciliary structure and function. This Drosophila melanogaster (Fruit fly) protein is B9 domain-containing protein 2.